Consider the following 84-residue polypeptide: MSKKSTSAALPSSFEEAMAELEQLVARMEAGELPLEASVAAYKRGSELVKYCAAQLEKVDNQVKVLEGDMLKPFNADRAIEADE.

It belongs to the XseB family. As to quaternary structure, heterooligomer composed of large and small subunits.

It localises to the cytoplasm. The catalysed reaction is Exonucleolytic cleavage in either 5'- to 3'- or 3'- to 5'-direction to yield nucleoside 5'-phosphates.. In terms of biological role, bidirectionally degrades single-stranded DNA into large acid-insoluble oligonucleotides, which are then degraded further into small acid-soluble oligonucleotides. The polypeptide is Exodeoxyribonuclease 7 small subunit (Janthinobacterium sp. (strain Marseille) (Minibacterium massiliensis)).